Reading from the N-terminus, the 492-residue chain is Probable Xaa-Pro aminopeptidase AO090005001240 (492 aa).

D272, D283, E420, and E459 together coordinate Mn(2+).

This sequence belongs to the peptidase M24B family. Mn(2+) serves as cofactor.

It carries out the reaction Release of any N-terminal amino acid, including proline, that is linked to proline, even from a dipeptide or tripeptide.. In terms of biological role, catalyzes the removal of a penultimate prolyl residue from the N-termini of peptides. The protein is Probable Xaa-Pro aminopeptidase AO090005001240 of Aspergillus oryzae (strain ATCC 42149 / RIB 40) (Yellow koji mold).